Reading from the N-terminus, the 156-residue chain is Small ribosomal subunit protein uS7 (156 aa).

This sequence belongs to the universal ribosomal protein uS7 family. As to quaternary structure, part of the 30S ribosomal subunit. Contacts proteins S9 and S11.

One of the primary rRNA binding proteins, it binds directly to 16S rRNA where it nucleates assembly of the head domain of the 30S subunit. Is located at the subunit interface close to the decoding center, probably blocks exit of the E-site tRNA. This is Small ribosomal subunit protein uS7 from Oceanobacillus iheyensis (strain DSM 14371 / CIP 107618 / JCM 11309 / KCTC 3954 / HTE831).